Reading from the N-terminus, the 59-residue chain is Large ribosomal subunit protein uL30 (59 aa).

It belongs to the universal ribosomal protein uL30 family. In terms of assembly, part of the 50S ribosomal subunit.

The chain is Large ribosomal subunit protein uL30 from Nocardia farcinica (strain IFM 10152).